Here is a 335-residue protein sequence, read N- to C-terminus: Nucleoid-associated protein PputGB1_0980 (335 aa).

Belongs to the YejK family.

It is found in the cytoplasm. The protein localises to the nucleoid. The protein is Nucleoid-associated protein PputGB1_0980 of Pseudomonas putida (strain GB-1).